Reading from the N-terminus, the 429-residue chain is Fc receptor-like protein 1 (429 aa).

A signal peptide spans 1 to 16; that stretch reads MLPRLLLLICAPLCEP. Ig-like C2-type domains follow at residues 17–104, 109–200, and 208–291; these read AELF…SQIN, PVAD…VSIT, and PILM…EAVT. Residues 17–307 lie on the Extracellular side of the membrane; sequence AELFLIASPS…TGARSNHLTS (291 aa). Disulfide bonds link C38–C86, C134–C183, and C229–C276. The N-linked (GlcNAc...) asparagine glycan is linked to N293. The chain crosses the membrane as a helical span at residues 308–328; the sequence is GVIEGLLSTLGPATVALLFCY. Residues 329-429 are Cytoplasmic-facing; that stretch reads GLKRKIGRRS…ITDVDYEDAM (101 aa). 5 consecutive short sequence motifs (ITIM motif) follow at residues 354–359, 367–372, 379–384, 410–415, and 423–428; these read FTYLNS, PIYENV, EVYSLA, DIYSRL, and VDYEDA.

In terms of assembly, interacts with ABL1. Interacts with GRB2 and SOS1. Interacts with SHIP-1/INPP5D. Post-translationally, phosphorylated on tyrosines upon activation. In terms of tissue distribution, primarily expressed in secondary lymphoid tissues by mature subsets of B-cells. Detected in spleen, lymph node, heart, skeletal muscle, kidney, liver and placenta. Specifically expressed by mature B lineage cells with higher expression in naive versus memory B-cells (at protein level).

The protein localises to the cell membrane. Its function is as follows. Type I transmembrane surface glycoprotein preferentially expressed by B-cells that regulates BCR-mediated signaling responses. Recruits ABL1 as the intracellular effector molecule to enhance B-cell activation. Also plays a negative role by suppressing ERK activation under homeostatic and BCR-stimulated conditions in a GRB2-dependent manner. In Homo sapiens (Human), this protein is Fc receptor-like protein 1 (FCRL1).